Consider the following 621-residue polypeptide: MFDFKAQLKILPNEPGVYLMKNSLGEIIYVGKAKILKNRVRQYFQNSKNHSEKVKAMVKNVAEFEYIVTDSEMEALILECNLIKKYSPKYNISLKDDKFYPFIKVTTNEDFPRVFITRNYAKDGNKYFGPYPNAGDVHETINLIRKIFPLRTCKKSIIEGEKPTRACLNYHIKKCNAPCEGRISKTEYKKMIDEIMEVLSGKDRSLLNKLKEEMQSASGNLEFEKAASLRDKMIAIENIAEKQKVFKSQENDEDFINIYKDEKDCCIQVFFLRDGKITGREHFMIENSSHEEDTTIISQFIISFYGGTPKVPKNIYIPESDEIEALEEFLSIKRGSRVFVKVPIKGEKKEMLELVKNNAKVTLDQFKDKILRDKEINMISLKEIQELLELDSIPLRIEAYDISNIQGVDSVGSMIVFENGKAKNSDYRRFRIKTVKSANDYDSMREILDRRFTHGLKEIEEIQNKEIKFSSGKFSNFPDLIMMDGGKGQVNIALEVLEKLGIDIPVCGLVKDDYHATRGIIYNNNELIINRNSNLMQMIRRIQDEVHRFAITYHRSLRDKRTLHSILDDIPNIGQKRRMSLLMKFGSIDNIKKATLDELLETESIDTKAANSVLEYFRNTK.

The GIY-YIG domain maps to 13–92; the sequence is NEPGVYLMKN…IKKYSPKYNI (80 aa). Residues 204-239 enclose the UVR domain; that stretch reads RSLLNKLKEEMQSASGNLEFEKAASLRDKMIAIENI.

The protein belongs to the UvrC family. Interacts with UvrB in an incision complex.

It is found in the cytoplasm. Functionally, the UvrABC repair system catalyzes the recognition and processing of DNA lesions. UvrC both incises the 5' and 3' sides of the lesion. The N-terminal half is responsible for the 3' incision and the C-terminal half is responsible for the 5' incision. The sequence is that of UvrABC system protein C from Clostridium beijerinckii (strain ATCC 51743 / NCIMB 8052) (Clostridium acetobutylicum).